We begin with the raw amino-acid sequence, 1392 residues long: DNA-directed RNA polymerase subunit beta'' (1392 aa).

4 residues coordinate Zn(2+): cysteine 224, cysteine 295, cysteine 302, and cysteine 305.

The protein belongs to the RNA polymerase beta' chain family. RpoC2 subfamily. As to quaternary structure, in plastids the minimal PEP RNA polymerase catalytic core is composed of four subunits: alpha, beta, beta', and beta''. When a (nuclear-encoded) sigma factor is associated with the core the holoenzyme is formed, which can initiate transcription. Requires Zn(2+) as cofactor.

Its subcellular location is the plastid. The protein localises to the chloroplast. It catalyses the reaction RNA(n) + a ribonucleoside 5'-triphosphate = RNA(n+1) + diphosphate. DNA-dependent RNA polymerase catalyzes the transcription of DNA into RNA using the four ribonucleoside triphosphates as substrates. This is DNA-directed RNA polymerase subunit beta'' from Nicotiana tomentosiformis (Tobacco).